A 612-amino-acid chain; its full sequence is Proline-rich protein 14 (612 aa).

Position 1 is an N-acetylmethionine (Met1). Polar residues-rich tracts occupy residues 1–15 (MDLPGNSSPFTQPSL) and 86–96 (VCTQSPALPSQ). Disordered regions lie at residues 1–48 (MDLP…EKAS), 65–96 (VPLTHKEDTPSPLTHNHHQDPVCTQSPALPSQ), 119–150 (RARQSSPALRMRSRAASGPEESPSKKTDQVPQ), and 206–256 (PTLT…PALE). Residues 1-135 (MDLPGNSSPF…ALRMRSRAAS (135 aa)) are sufficient for heterochromatin association in interphase and chromatin association in anaphase. The segment at 85-405 (PVCTQSPALP…MARTPPPPRP (321 aa)) is required for the interaction with GRB2 and sufficient to promote the phosphorylation of AKT and cell proliferation. Residues 136 to 392 (GPEESPSKKT…QSRPRRHTVG (257 aa)) are required for nuclear lamina association. The segment covering 243 to 252 (ADPPESPVPD) has biased composition (pro residues). Ser307 is subject to Phosphoserine. Disordered stretches follow at residues 323–405 (QSRA…PPRP), 444–463 (LGSTKGKELRASKDKVFSDP), and 553–583 (DSSLPRSRRPSRGVRTAASRTLTPNLAPSQD). Residues 342-359 (WRTQCNSLAPVSKSSLGR) are compositionally biased toward polar residues. The span at 366–379 (LGPPDPGSWPPVPS) shows a compositional bias: pro residues. Residues 448–463 (KGKELRASKDKVFSDP) show a composition bias toward basic and acidic residues. A required for nuclear localization region spans residues 546 to 563 (RRAVEFRDSSLPRSRRPS). Polar residues predominate over residues 570 to 583 (ASRTLTPNLAPSQD).

As to quaternary structure, interacts (via proline-rich region) with GRB2 (via SH3 domain 2). Interacts (via N-terminus) with CBX5.

Its subcellular location is the chromosome. The protein localises to the nucleus. It is found in the nucleus lamina. The protein resides in the nucleoplasm. In terms of biological role, functions in tethering peripheral heterochromatin to the nuclear lamina during interphase, possibly through the interaction with heterochromatin protein CBX5/HP1 alpha. Might play a role in reattaching heterochromatin to the nuclear lamina at mitotic exit. Promotes myoblast differentiation during skeletal myogenesis, possibly by stimulating transcription factor MyoD activity via binding to CBX5/HP1 alpha. Involved in the positive regulation of the PI3K-Akt-mTOR signaling pathway and in promoting cell proliferation, possibly via binding to GRB2. This chain is Proline-rich protein 14 (Prr14), found in Mus musculus (Mouse).